We begin with the raw amino-acid sequence, 291 residues long: 4-hydroxy-tetrahydrodipicolinate synthase (291 aa).

A pyruvate-binding site is contributed by T44. Residue Y132 is the Proton donor/acceptor of the active site. The active-site Schiff-base intermediate with substrate is the K160. I202 is a pyruvate binding site.

This sequence belongs to the DapA family. As to quaternary structure, homotetramer; dimer of dimers.

It is found in the cytoplasm. It carries out the reaction L-aspartate 4-semialdehyde + pyruvate = (2S,4S)-4-hydroxy-2,3,4,5-tetrahydrodipicolinate + H2O + H(+). The protein operates within amino-acid biosynthesis; L-lysine biosynthesis via DAP pathway; (S)-tetrahydrodipicolinate from L-aspartate: step 3/4. Its function is as follows. Catalyzes the condensation of (S)-aspartate-beta-semialdehyde [(S)-ASA] and pyruvate to 4-hydroxy-tetrahydrodipicolinate (HTPA). The chain is 4-hydroxy-tetrahydrodipicolinate synthase from Syntrophus aciditrophicus (strain SB).